The sequence spans 201 residues: Small ribosomal subunit protein uS5 (201 aa).

Residues 1–27 are disordered; it reads MAGPQRRGSGAGGGERRDRKGRDGGAA. A compositionally biased stretch (basic and acidic residues) spans 14-23; that stretch reads GERRDRKGRD. In terms of domain architecture, S5 DRBM spans 34-97; the sequence is YVERVVAINR…EEAKKHFFKV (64 aa).

The protein belongs to the universal ribosomal protein uS5 family. Part of the 30S ribosomal subunit. Contacts proteins S4 and S8.

In terms of biological role, with S4 and S12 plays an important role in translational accuracy. Its function is as follows. Located at the back of the 30S subunit body where it stabilizes the conformation of the head with respect to the body. In Streptomyces avermitilis (strain ATCC 31267 / DSM 46492 / JCM 5070 / NBRC 14893 / NCIMB 12804 / NRRL 8165 / MA-4680), this protein is Small ribosomal subunit protein uS5.